The chain runs to 201 residues: Ribonuclease HII (201 aa).

An RNase H type-2 domain is found at 11-201 (LRECGCDEAG…VVDADRPTTE (191 aa)). Asp17, Glu18, and Asp109 together coordinate a divalent metal cation.

This sequence belongs to the RNase HII family. The cofactor is Mn(2+). Requires Mg(2+) as cofactor.

Its subcellular location is the cytoplasm. The enzyme catalyses Endonucleolytic cleavage to 5'-phosphomonoester.. Its function is as follows. Endonuclease that specifically degrades the RNA of RNA-DNA hybrids. This chain is Ribonuclease HII (rnhB), found in Porphyromonas gingivalis (strain ATCC BAA-308 / W83).